An 821-amino-acid chain; its full sequence is Enhancer of polycomb-like protein 1 (821 aa).

Polar residues predominate over residues 1 to 12; that stretch reads MSSNGGSNTNER. Disordered regions lie at residues 1–43, 427–485, and 779–799; these read MSSN…TRFR, KAAA…QPAM, and QFLQ…PINP. Composition is skewed to low complexity over residues 18–39 and 449–465; these read SGSL…DSGS and EQAA…SSSQ. The span at 786–799 shows a compositional bias: polar residues; that stretch reads ENGSPNNATMPINP.

This sequence belongs to the enhancer of polycomb family. Component of the NuA4 histone acetyltransferase complex.

Its subcellular location is the nucleus. In terms of biological role, component of the NuA4 histone acetyltransferase complex which is involved in transcriptional activation of selected genes principally by acetylation of nucleosomal histone H4 and H2A. The NuA4 complex is also involved in DNA repair. Involved in gene silencing by neighboring heterochromatin, blockage of the silencing spreading along the chromosome, and required for cell cycle progression through G2/M. In Candida glabrata (strain ATCC 2001 / BCRC 20586 / JCM 3761 / NBRC 0622 / NRRL Y-65 / CBS 138) (Yeast), this protein is Enhancer of polycomb-like protein 1 (EPL1).